A 306-amino-acid chain; its full sequence is Aspartate carbamoyltransferase catalytic subunit (306 aa).

Residues R55 and T56 each coordinate carbamoyl phosphate. K85 lines the L-aspartate pocket. Residues R106, H133, and Q136 each coordinate carbamoyl phosphate. Residues R166 and R228 each coordinate L-aspartate. Residues L264 and P265 each coordinate carbamoyl phosphate.

The protein belongs to the aspartate/ornithine carbamoyltransferase superfamily. ATCase family. As to quaternary structure, heterododecamer (2C3:3R2) of six catalytic PyrB chains organized as two trimers (C3), and six regulatory PyrI chains organized as three dimers (R2).

The catalysed reaction is carbamoyl phosphate + L-aspartate = N-carbamoyl-L-aspartate + phosphate + H(+). It functions in the pathway pyrimidine metabolism; UMP biosynthesis via de novo pathway; (S)-dihydroorotate from bicarbonate: step 2/3. In terms of biological role, catalyzes the condensation of carbamoyl phosphate and aspartate to form carbamoyl aspartate and inorganic phosphate, the committed step in the de novo pyrimidine nucleotide biosynthesis pathway. The sequence is that of Aspartate carbamoyltransferase catalytic subunit from Serratia marcescens.